The chain runs to 212 residues: Pyridoxine/pyridoxamine 5'-phosphate oxidase (212 aa).

Residues 8 to 11 and K66 contribute to the substrate site; that span reads RRTY. Residues 61 to 66, 76 to 77, R82, K83, and Q105 each bind FMN; these read RIVLLK and FT. The substrate site is built by Y123, R127, and S131. FMN contacts are provided by residues 140 to 141 and W184; that span reads QS. Residue 190–192 participates in substrate binding; the sequence is RLH. R194 provides a ligand contact to FMN.

It belongs to the pyridoxamine 5'-phosphate oxidase family. As to quaternary structure, homodimer. The cofactor is FMN.

The catalysed reaction is pyridoxamine 5'-phosphate + O2 + H2O = pyridoxal 5'-phosphate + H2O2 + NH4(+). The enzyme catalyses pyridoxine 5'-phosphate + O2 = pyridoxal 5'-phosphate + H2O2. It functions in the pathway cofactor metabolism; pyridoxal 5'-phosphate salvage; pyridoxal 5'-phosphate from pyridoxamine 5'-phosphate: step 1/1. The protein operates within cofactor metabolism; pyridoxal 5'-phosphate salvage; pyridoxal 5'-phosphate from pyridoxine 5'-phosphate: step 1/1. Its function is as follows. Catalyzes the oxidation of either pyridoxine 5'-phosphate (PNP) or pyridoxamine 5'-phosphate (PMP) into pyridoxal 5'-phosphate (PLP). The protein is Pyridoxine/pyridoxamine 5'-phosphate oxidase of Cupriavidus pinatubonensis (strain JMP 134 / LMG 1197) (Cupriavidus necator (strain JMP 134)).